A 202-amino-acid chain; its full sequence is Recoverin (202 aa).

Gly2 carries the N-myristoyl glycine lipid modification. Cys39 is subject to Cysteine sulfenic acid (-SOH). EF-hand domains lie at 41–59, 61–96, 97–132, and 147–182; these read SGRI…FFPD, DPKA…TTAG, KPTQ…IFKM, and TPEK…NKEI. Positions 74, 76, 78, 80, 85, 110, 112, 114, 116, and 121 each coordinate Ca(2+). The interval 189-192 is interaction with GRK1; that stretch reads EPQK.

It belongs to the recoverin family. Homodimer; disulfide-linked. Homodimerization is caused by prolonged intense illumination. May form a complex composed of RHO, GRK1 and RCVRN in a Ca(2+)-dependent manner; RCVRN prevents the interaction between GRK1 and RHO. Interacts (via C-terminus) with GRK1 (via N-terminus); the interaction is Ca(2+)-dependent. The N-terminal glycine is linked to one of four different types of acyl groups. The most abundant is myristoleate (14:1), but 14:0, 14:2, and 12:0 acyl residues are also present. The Ca(2+) induced exposure of the myristoyl group, known as the calcium-myristoyl switch, promotes RCVRN binding to the photoreceptor cell membranes only when intracellular Ca(2+) concentration is high. In terms of processing, oxidation on Cys-39 occurs in response to prolonged intense illumination and results in the formation of disulfide homodimers, and to a lesser extent disulfide-linked heterodimers. In terms of tissue distribution, expressed in rod photoreceptors in the retina (at protein level).

It is found in the photoreceptor inner segment. The protein localises to the cell projection. The protein resides in the cilium. It localises to the photoreceptor outer segment. Its subcellular location is the photoreceptor outer segment membrane. It is found in the perikaryon. In terms of biological role, acts as a calcium sensor and regulates phototransduction of cone and rod photoreceptor cells. Modulates light sensitivity of cone photoreceptor in dark and dim conditions. In response to high Ca(2+) levels induced by low light levels, prolongs RHO/rhodopsin activation in rod photoreceptor cells by binding to and inhibiting GRK1-mediated phosphorylation of RHO/rhodopsin. Plays a role in scotopic vision/enhances vision in dim light by enhancing signal transfer between rod photoreceptors and rod bipolar cells. Improves rod photoreceptor sensitivity in dim light and mediates response of rod photoreceptors to facilitate detection of change and motion in bright light. This is Recoverin (Rcvrn) from Mus musculus (Mouse).